A 185-amino-acid polypeptide reads, in one-letter code: Peptidyl-tRNA hydrolase (185 aa).

Tyrosine 14 provides a ligand contact to tRNA. The active-site Proton acceptor is the histidine 19. TRNA-binding residues include tyrosine 64, asparagine 66, and asparagine 112.

The protein belongs to the PTH family. Monomer.

The protein resides in the cytoplasm. It carries out the reaction an N-acyl-L-alpha-aminoacyl-tRNA + H2O = an N-acyl-L-amino acid + a tRNA + H(+). Its function is as follows. Hydrolyzes ribosome-free peptidyl-tRNAs (with 1 or more amino acids incorporated), which drop off the ribosome during protein synthesis, or as a result of ribosome stalling. Catalyzes the release of premature peptidyl moieties from peptidyl-tRNA molecules trapped in stalled 50S ribosomal subunits, and thus maintains levels of free tRNAs and 50S ribosomes. This chain is Peptidyl-tRNA hydrolase, found in Lactobacillus acidophilus (strain ATCC 700396 / NCK56 / N2 / NCFM).